We begin with the raw amino-acid sequence, 100 residues long: NADH-quinone oxidoreductase subunit K 2 (100 aa).

Transmembrane regions (helical) follow at residues 4–24, 28–48, and 60–80; these read LWWH…GVLL, ILVV…NFIA, and IFAI…LGIL.

It belongs to the complex I subunit 4L family. NDH-1 is composed of 14 different subunits. Subunits NuoA, H, J, K, L, M, N constitute the membrane sector of the complex.

Its subcellular location is the cell inner membrane. It carries out the reaction a quinone + NADH + 5 H(+)(in) = a quinol + NAD(+) + 4 H(+)(out). NDH-1 shuttles electrons from NADH, via FMN and iron-sulfur (Fe-S) centers, to quinones in the respiratory chain. The immediate electron acceptor for the enzyme in this species is believed to be ubiquinone. Couples the redox reaction to proton translocation (for every two electrons transferred, four hydrogen ions are translocated across the cytoplasmic membrane), and thus conserves the redox energy in a proton gradient. This Sinorhizobium fredii (strain NBRC 101917 / NGR234) protein is NADH-quinone oxidoreductase subunit K 2.